We begin with the raw amino-acid sequence, 333 residues long: Ribosomal RNA small subunit methyltransferase C (333 aa).

Belongs to the methyltransferase superfamily. RsmC family. In terms of assembly, monomer.

The protein localises to the cytoplasm. The catalysed reaction is guanosine(1207) in 16S rRNA + S-adenosyl-L-methionine = N(2)-methylguanosine(1207) in 16S rRNA + S-adenosyl-L-homocysteine + H(+). Specifically methylates the guanine in position 1207 of 16S rRNA in the 30S particle. In Chromohalobacter salexigens (strain ATCC BAA-138 / DSM 3043 / CIP 106854 / NCIMB 13768 / 1H11), this protein is Ribosomal RNA small subunit methyltransferase C.